Here is an 86-residue protein sequence, read N- to C-terminus: MVVIRMARGGSKKRPFYNLVATDSRNRRDGRFIERVGFYNPVASEGSESLRISLDRVQYWTNSGAQLSPAVERLVKDYSAKVSAAA.

It belongs to the bacterial ribosomal protein bS16 family.

This is Small ribosomal subunit protein bS16 from Bordetella petrii (strain ATCC BAA-461 / DSM 12804 / CCUG 43448).